The chain runs to 143 residues: Large ribosomal subunit protein uL13 (143 aa).

This sequence belongs to the universal ribosomal protein uL13 family. In terms of assembly, part of the 50S ribosomal subunit.

Its function is as follows. This protein is one of the early assembly proteins of the 50S ribosomal subunit, although it is not seen to bind rRNA by itself. It is important during the early stages of 50S assembly. The chain is Large ribosomal subunit protein uL13 from Alkaliphilus oremlandii (strain OhILAs) (Clostridium oremlandii (strain OhILAs)).